A 145-amino-acid polypeptide reads, in one-letter code: Hemoglobin subunit beta (145 aa).

The 145-residue stretch at 1 to 145 (MLTAEEKAAV…VANALAHRYH (145 aa)) folds into the Globin domain. Position 11 is a phosphothreonine (T11). K58 carries the N6-acetyllysine modification. H62 is a binding site for heme b. The residue at position 81 (K81) is an N6-acetyllysine. H91 provides a ligand contact to heme b. An S-nitrosocysteine modification is found at C92.

The protein belongs to the globin family. As to quaternary structure, heterotetramer of two alpha chains and two beta chains. Red blood cells.

Its function is as follows. Involved in oxygen transport from the lung to the various peripheral tissues. In Alces alces alces (European moose), this protein is Hemoglobin subunit beta (HBB).